The chain runs to 382 residues: Lipid-A-disaccharide synthase (382 aa).

Belongs to the LpxB family.

It carries out the reaction 2-N,3-O-bis[(3R)-3-hydroxytetradecanoyl]-alpha-D-glucosaminyl 1-phosphate + UDP-2-N,3-O-bis[(3R)-3-hydroxytetradecanoyl]-alpha-D-glucosamine = lipid A disaccharide (E. coli) + UDP + H(+). The enzyme catalyses a lipid X + a UDP-2-N,3-O-bis[(3R)-3-hydroxyacyl]-alpha-D-glucosamine = a lipid A disaccharide + UDP + H(+). The protein operates within glycolipid biosynthesis; lipid IV(A) biosynthesis; lipid IV(A) from (3R)-3-hydroxytetradecanoyl-[acyl-carrier-protein] and UDP-N-acetyl-alpha-D-glucosamine: step 5/6. Functionally, condensation of UDP-2,3-diacylglucosamine and 2,3-diacylglucosamine-1-phosphate to form lipid A disaccharide, a precursor of lipid A, a phosphorylated glycolipid that anchors the lipopolysaccharide to the outer membrane of the cell. The sequence is that of Lipid-A-disaccharide synthase from Sodalis glossinidius (strain morsitans).